The chain runs to 163 residues: Protein-export protein SecB (163 aa).

Belongs to the SecB family. Homotetramer, a dimer of dimers. One homotetramer interacts with 1 SecA dimer.

The protein resides in the cytoplasm. One of the proteins required for the normal export of preproteins out of the cell cytoplasm. It is a molecular chaperone that binds to a subset of precursor proteins, maintaining them in a translocation-competent state. It also specifically binds to its receptor SecA. The polypeptide is Protein-export protein SecB (Methylibium petroleiphilum (strain ATCC BAA-1232 / LMG 22953 / PM1)).